A 189-amino-acid chain; its full sequence is Bilin-binding protein (189 aa).

An N-terminal signal peptide occupies residues 1 to 15 (MQYLIVLALVAAASA). Cystine bridges form between Cys-23–Cys-130 and Cys-57–Cys-185.

Belongs to the calycin superfamily. Lipocalin family. Homotetramer. As to expression, hemolymph.

The protein resides in the secreted. Its function is as follows. This protein binds the blue pigments bilins. The chain is Bilin-binding protein from Pieris brassicae (White butterfly).